Consider the following 32-residue polypeptide: Mu-theraphotoxin-Se1a (32 aa).

3 cysteine pairs are disulfide-bonded: Cys-2/Cys-17, Cys-9/Cys-22, and Cys-16/Cys-28.

It belongs to the neurotoxin 10 (Hwtx-1) family. Expressed by the venom gland.

The protein localises to the secreted. Its function is as follows. Voltage-gated sodium channel Nav1.7/SCN9A inhibitor. This chain is Mu-theraphotoxin-Se1a, found in Selenocosmia effera (Tarantula spider).